The chain runs to 542 residues: Chaperonin GroEL 3 (542 aa).

Residues Thr-30–Pro-33, Lys-51, Asp-87–Thr-91, Gly-415, and Asp-494 contribute to the ATP site. A disordered region spans residues Lys-523–Asp-542.

The protein belongs to the chaperonin (HSP60) family. Forms a cylinder of 14 subunits composed of two heptameric rings stacked back-to-back. Interacts with the co-chaperonin GroES.

It localises to the cytoplasm. The catalysed reaction is ATP + H2O + a folded polypeptide = ADP + phosphate + an unfolded polypeptide.. Functionally, together with its co-chaperonin GroES, plays an essential role in assisting protein folding. The GroEL-GroES system forms a nano-cage that allows encapsulation of the non-native substrate proteins and provides a physical environment optimized to promote and accelerate protein folding. The protein is Chaperonin GroEL 3 of Syntrophus aciditrophicus (strain SB).